The chain runs to 1286 residues: Galactose/N-acetyl-D-galactosamine lectin heavy subunit 2 (1286 aa).

The signal sequence occupies residues 1–15 (MKLLLLNILLLCCLA). Residues 16 to 1227 (DKLNEFSADI…NNVGAIAAAT (1212 aa)) lie on the Extracellular side of the membrane. N-linked (GlcNAc...) asparagine glycosylation is found at N200, N331, N384, N462, N652, N883, N1197, and N1207. A helical transmembrane segment spans residues 1228–1248 (TVAVVVVAVVVALIVVSIGLF). Residues 1249-1286 (KTYQLVSSAMKNAITTTNENAEYVGADNEATNAATYNG) lie on the Cytoplasmic side of the membrane.

In terms of assembly, heterodimer composed of a 170 kDa heavy subunit (hgl) and a 31/35 kDa light subunit (lgl); disulfide-linked. In terms of processing, N-glycosylated.

Its subcellular location is the cell membrane. Lectin which binds galactose and N-acetyl-D-galactosamine of host glycoproteins and thus mediates adhesion to host cells. Mediates adherence to host colonic mucins, an essential step for pathogenic tissue invasion. The sequence is that of Galactose/N-acetyl-D-galactosamine lectin heavy subunit 2 from Entamoeba histolytica (strain ATCC 30459 / HM-1:IMSS / ABRM).